Here is a 154-residue protein sequence, read N- to C-terminus: Probable transport accessory protein MmpS4 (154 aa).

Helical transmembrane passes span isoleucine 19 to valine 39 and glutamine 97 to alanine 117.

It belongs to the MmpS family.

The protein localises to the cell membrane. This Mycobacterium leprae (strain TN) protein is Probable transport accessory protein MmpS4.